The sequence spans 410 residues: Chorismate synthase (410 aa).

NADP(+)-binding residues include Arg-43 and Arg-49. Residues 143 to 145 (RSS), 264 to 265 (QA), Gly-308, 323 to 327 (KPIST), and Arg-349 each bind FMN.

Belongs to the chorismate synthase family. As to quaternary structure, homotetramer. FMNH2 is required as a cofactor.

It catalyses the reaction 5-O-(1-carboxyvinyl)-3-phosphoshikimate = chorismate + phosphate. It functions in the pathway metabolic intermediate biosynthesis; chorismate biosynthesis; chorismate from D-erythrose 4-phosphate and phosphoenolpyruvate: step 7/7. Functionally, catalyzes the anti-1,4-elimination of the C-3 phosphate and the C-6 proR hydrogen from 5-enolpyruvylshikimate-3-phosphate (EPSP) to yield chorismate, which is the branch point compound that serves as the starting substrate for the three terminal pathways of aromatic amino acid biosynthesis. This reaction introduces a second double bond into the aromatic ring system. The chain is Chorismate synthase from Corynebacterium glutamicum (strain ATCC 13032 / DSM 20300 / JCM 1318 / BCRC 11384 / CCUG 27702 / LMG 3730 / NBRC 12168 / NCIMB 10025 / NRRL B-2784 / 534).